The sequence spans 75 residues: Large ribosomal subunit protein uL29 (75 aa).

The protein belongs to the universal ribosomal protein uL29 family.

In Pyrobaculum aerophilum (strain ATCC 51768 / DSM 7523 / JCM 9630 / CIP 104966 / NBRC 100827 / IM2), this protein is Large ribosomal subunit protein uL29.